A 125-amino-acid polypeptide reads, in one-letter code: Small ribosomal subunit protein uS11 (125 aa).

It belongs to the universal ribosomal protein uS11 family. Part of the 30S ribosomal subunit. Interacts with proteins S7 and S18. Binds to IF-3.

Located on the platform of the 30S subunit, it bridges several disparate RNA helices of the 16S rRNA. Forms part of the Shine-Dalgarno cleft in the 70S ribosome. This is Small ribosomal subunit protein uS11 from Coprothermobacter proteolyticus (strain ATCC 35245 / DSM 5265 / OCM 4 / BT).